Reading from the N-terminus, the 347-residue chain is Dehydratase asqC (347 aa).

An N-terminal signal peptide occupies residues 1 to 18 (MRPAILAAFSTLPAAAKA). N-linked (GlcNAc...) asparagine glycans are attached at residues N51, N103, N131, N143, N215, N264, and N281.

It catalyses the reaction [(1'E)-5'-(3',3'-dimethyloxiran-2'-yl)-3'-hydroxy-3'-methylpent-1'-en-1'-yl]-quinolinone B = (1'E,3'E)-5-(3,3-dimethyloxiran-2-yl)-3-methylhexa-1,3-dienyl-quinolinone B + H2O. It participates in secondary metabolite biosynthesis. The protein operates within alkaloid biosynthesis. It functions in the pathway mycotoxin biosynthesis. In terms of biological role, dehydratase; part of the gene cluster that mediates the biosynthesis of the aspoquinolone mycotoxins. Within the pathway, the dehydratase asqC catalyzes the dehydratation of the epoxide at C-3 to produce (1'E,3'E)-5-(3,3-dimethyloxiran-2-yl)-3-methylhexa-1,3-dienyl-quinolinone B. The first step of the pathway is catalyzed by the nonribosomal peptide synthetase asqK that condenses anthranilic acid and O-methyl-L-tyrosine to produce 4'-methoxycyclopeptin. 4'-methoxycyclopeptin is then converted to 4'-methoxydehydrocyclopeptin by the ketoglutarate-dependent dioxygenase asqJ. AsqJ also converts its first product 4'-methoxydehydrocyclopeptin to 4'-methoxycyclopenin. The following conversion of 4'-methoxycyclopenin into 4'-methoxyviridicatin is catalyzed by the cyclopenase asqI. 4'-methoxyviridicatin is the precursor of quinolone natural products, and is further converted to quinolinone B. The prenyltransferase asqH1 then catalyzes the canonical Friedel-Crafts alkylation of quinolinone B with dimethylallyl cation to yield dimethylallyl quinolone, which is subjected to FAD-dependent dehydrogenation by the FAD-linked oxidoreductase asqF to yield conjugated aryl diene. The delta(3') double bond then serves as the site of the second alkylation with DMAPP catalyzed by the prenyltransferase asqH2 to yield a carbenium ion intermediate, which can be attacked by H(2)O to yield a styrenyl quinolone containing a C3'-hydroxyprenyl chain. The FAD-dependent monooxygenase asqG performs epoxidation of the terminal C7'-C8' olefin. Finally, after dehydratation of the epoxide at C3 by asqC, the quinolone epoxide rearrangement protein asqO catalyzes an enzymatic 3-exo-tet cyclization to yield the cyclopropyl-THF ring system in aspoquinolone. The chain is Dehydratase asqC from Emericella nidulans (strain FGSC A4 / ATCC 38163 / CBS 112.46 / NRRL 194 / M139) (Aspergillus nidulans).